We begin with the raw amino-acid sequence, 914 residues long: DNA mismatch repair protein MutS (914 aa).

The segment at 1-25 is disordered; it reads MDKKNDHKNNLIPQPASSFASSQER. The segment covering 11-25 has biased composition (polar residues); sequence LIPQPASSFASSQER. 662–669 lines the ATP pocket; the sequence is GPNMGGKS.

It belongs to the DNA mismatch repair MutS family.

This protein is involved in the repair of mismatches in DNA. It is possible that it carries out the mismatch recognition step. This protein has a weak ATPase activity. This chain is DNA mismatch repair protein MutS, found in Bartonella tribocorum (strain CIP 105476 / IBS 506).